We begin with the raw amino-acid sequence, 187 residues long: Corticoliberin (187 aa).

The first 24 residues, 1–24 (MRLRLLVSAGMLLVALSPCLPCRA), serve as a signal peptide directing secretion. Positions 25–144 (LLSRGSVSGA…HQGALERERR (120 aa)) are excised as a propeptide. Positions 75-95 (AARLSPNSTPLTAGRGSRPSH) are disordered. Ile-185 bears the Isoleucine amide mark.

The protein belongs to the sauvagine/corticotropin-releasing factor/urotensin I family. As to quaternary structure, interacts (via C-terminus) with CRFR1 (via N-terminal extracellular domain). As to expression, produced by the hypothalamus.

It localises to the secreted. Hormone regulating the release of corticotropin from pituitary gland. Induces NLRP6 in intestinal epithelial cells, hence may influence gut microbiota profile. The protein is Corticoliberin (Crh) of Rattus norvegicus (Rat).